We begin with the raw amino-acid sequence, 103 residues long: Large ribosomal subunit protein bL21 (103 aa).

Belongs to the bacterial ribosomal protein bL21 family. Part of the 50S ribosomal subunit. Contacts protein L20.

Functionally, this protein binds to 23S rRNA in the presence of protein L20. The chain is Large ribosomal subunit protein bL21 from Chloroflexus aurantiacus (strain ATCC 29364 / DSM 637 / Y-400-fl).